Here is an 86-residue protein sequence, read N- to C-terminus: Centromere protein W (86 aa).

The protein belongs to the CENP-W/WIP1 family. As to quaternary structure, heterodimer with CENPT; this dimer coassembles with CENPS-CENPX heterodimers at centromeres to form the tetrameric CENP-T-W-S-X complex, which is a subcomplex of the large constitutive centromere-associated network (CCAN, also known as the interphase centromere complex or ICEN). Interacts with NPM1.

It is found in the nucleus. Its subcellular location is the chromosome. The protein resides in the centromere. It localises to the kinetochore. The protein localises to the nucleus matrix. It is found in the nucleolus. In terms of biological role, component of the CENPA-NAC (nucleosome-associated) complex, a complex that plays a central role in assembly of kinetochore proteins, mitotic progression and chromosome segregation. The CENPA-NAC complex recruits the CENPA-CAD (nucleosome distal) complex and may be involved in incorporation of newly synthesized CENPA into centromeres. Part of a nucleosome-associated complex that binds specifically to histone H3-containing nucleosomes at the centromere, as opposed to nucleosomes containing CENPA. Component of the heterotetrameric CENP-T-W-S-X complex that binds and supercoils DNA, and plays an important role in kinetochore assembly. CENPW has a fundamental role in kinetochore assembly and function. It is one of the inner kinetochore proteins, with most further proteins binding downstream. Required for normal chromosome organization and normal progress through mitosis. This is Centromere protein W (Cenpw) from Mus musculus (Mouse).